The sequence spans 522 residues: Peptide chain release factor 3 (522 aa).

In terms of domain architecture, tr-type G spans 9 to 276 (KKRRTFAIIS…SFVNLAPAPQ (268 aa)). Residues 18–25 (SHPDAGKT), 86–90 (DTPGH), and 140–143 (NKLD) each bind GTP.

Belongs to the TRAFAC class translation factor GTPase superfamily. Classic translation factor GTPase family. PrfC subfamily.

It is found in the cytoplasm. Functionally, increases the formation of ribosomal termination complexes and stimulates activities of RF-1 and RF-2. It binds guanine nucleotides and has strong preference for UGA stop codons. It may interact directly with the ribosome. The stimulation of RF-1 and RF-2 is significantly reduced by GTP and GDP, but not by GMP. This is Peptide chain release factor 3 from Lactobacillus johnsonii (strain CNCM I-12250 / La1 / NCC 533).